Reading from the N-terminus, the 396-residue chain is Probable sugar efflux transporter (396 aa).

The next 12 membrane-spanning stretches (helical) occupy residues 15–35, 50–70, 81–101, 103–123, 136–156, 169–189, 202–222, 246–266, 275–295, 301–321, 333–353, and 364–384; these read VVTLAIAAFIFNTTEFVPVGL, VGIMLTIYAWVVAVMSLPFML, LICLFVLFIASHVLSFLAWNF, VLVISRIGIAFAHAIFWSITA, AQALSLIATGTALAMVLGLPI, TFFAIGMGALITLLCLIKLLP, LPLLFRCPALMSLYVLTVVVV, FATVLLLLLGGAGIIGSLVFG, SLVSIAIALLVVCLLLLLPAA, LAILSIFWGIAIMVIGLGMQV, VAMALFSGIFNIGIGAGALVG, and AIGYIGAIPACAALVWAVLIF.

The protein belongs to the major facilitator superfamily. SotB (TC 2.A.1.2) family.

Its subcellular location is the cell inner membrane. Involved in the efflux of sugars. The physiological role may be the reduction of the intracellular concentration of toxic sugars or sugar metabolites. The chain is Probable sugar efflux transporter from Salmonella paratyphi A (strain ATCC 9150 / SARB42).